A 180-amino-acid polypeptide reads, in one-letter code: ATP synthase subunit delta (180 aa).

This sequence belongs to the ATPase delta chain family. F-type ATPases have 2 components, F(1) - the catalytic core - and F(0) - the membrane proton channel. F(1) has five subunits: alpha(3), beta(3), gamma(1), delta(1), epsilon(1). F(0) has three main subunits: a(1), b(2) and c(10-14). The alpha and beta chains form an alternating ring which encloses part of the gamma chain. F(1) is attached to F(0) by a central stalk formed by the gamma and epsilon chains, while a peripheral stalk is formed by the delta and b chains.

The protein localises to the cell inner membrane. In terms of biological role, f(1)F(0) ATP synthase produces ATP from ADP in the presence of a proton or sodium gradient. F-type ATPases consist of two structural domains, F(1) containing the extramembraneous catalytic core and F(0) containing the membrane proton channel, linked together by a central stalk and a peripheral stalk. During catalysis, ATP synthesis in the catalytic domain of F(1) is coupled via a rotary mechanism of the central stalk subunits to proton translocation. Its function is as follows. This protein is part of the stalk that links CF(0) to CF(1). It either transmits conformational changes from CF(0) to CF(1) or is implicated in proton conduction. This Legionella pneumophila subsp. pneumophila (strain Philadelphia 1 / ATCC 33152 / DSM 7513) protein is ATP synthase subunit delta.